The sequence spans 1146 residues: Inositol hexakisphosphate and diphosphoinositol-pentakisphosphate kinase (1146 aa).

The disordered stretch occupies residues 1–33 (MSGIKKEPIESDEVPQQETKNNLPSAPSEMSPL). The segment covering 16–25 (QQETKNNLPS) has biased composition (polar residues). 3 positions are modified to phosphoserine: serine 31, serine 54, and serine 77. Residues 93-185 (TALGNGNNTN…STSHPKPRLP (93 aa)) form a disordered region. Positions 96-106 (GNGNNTNTVTT) are enriched in low complexity. The segment covering 110–120 (KKADSESKSEA) has biased composition (basic and acidic residues). Positions 125-144 (LSNSNIVNDADNINSISKTG) are enriched in polar residues. A compositionally biased stretch (low complexity) spans 164–178 (SVPTSSASSRKSSTS). Residue 197–198 (AK) participates in substrate binding. Residues arginine 278, lysine 351, histidine 358, arginine 377, 402-405 (EQFM), and 412-414 (DVK) each bind ATP. 377–378 (RK) is a binding site for substrate. Substrate is bound by residues lysine 414 and arginine 428. ATP-binding positions include serine 430, aspartate 475, and 487 to 489 (DVN). Residue 492-495 (SFVK) coordinates substrate. The segment at 530-597 (REEKEQKWVF…VLQALRIALD (68 aa)) is polyphosphoinositide-binding domain. Residues serine 895 and serine 1107 each carry the phosphoserine modification. Positions 1106-1146 (TSPNLSFQKRKTRRKSVSVEKLKRPASSGSSSSTSVNKTLD) are disordered.

It belongs to the histidine acid phosphatase family. VIP1 subfamily.

Its subcellular location is the cytoplasm. The protein localises to the cytoskeleton. It carries out the reaction 1D-myo-inositol hexakisphosphate + ATP = 1-diphospho-1D-myo-inositol 2,3,4,5,6-pentakisphosphate + ADP. It catalyses the reaction 5-diphospho-1D-myo-inositol 1,2,3,4,6-pentakisphosphate + ATP + H(+) = 1,5-bis(diphospho)-1D-myo-inositol 2,3,4,6-tetrakisphosphate + ADP. Functionally, bifunctional inositol kinase that acts in concert with the IP6K kinases to synthesize the diphosphate group-containing inositol pyrophosphates diphosphoinositol pentakisphosphate, PP-InsP5, and bis-diphosphoinositol tetrakisphosphate, (PP)2-InsP4. Phosphorylates inositol hexakisphosphate (InsP6) at position 1 to produce PP-InsP5 which is in turn phosphorylated by IP6Ks to produce (PP)2-InsP4. Alternatively, phosphorylates PP-InsP5 at position 1, produced by IP6Ks from InsP6, to produce (PP)2-InsP4. Required for maintaining cellular integrity, normal growth and interactions with the ARP complex. Acts as a regulator of the PHO80-PHO85 cyclin/cyclin-dependent kinase (CDK) complex, thereby regulating signaling of phosphate availability. Required for the function of the cortical actin cytoskeleton, possibly by participating in correct F-actin localization and ensuring polarized growth. Regulates polarized growth and modulates interphase microtubule cytoskeleton. Regulates microtubule dynamics without the requirement of microtubule plus-end tracking protein Mal3. Required for growth zone selection. This chain is Inositol hexakisphosphate and diphosphoinositol-pentakisphosphate kinase, found in Saccharomyces cerevisiae (strain ATCC 204508 / S288c) (Baker's yeast).